Reading from the N-terminus, the 299-residue chain is Rhodanese-like/PpiC domain-containing protein 12, chloroplastic (299 aa).

The N-terminal 81 residues, 1–81 (MFRVTGTLSA…SGFPALKMRA (81 aa)), are a transit peptide targeting the chloroplast. Residue serine 82 is modified to N-acetylserine. In terms of domain architecture, PpiC spans 93 to 183 (SREILVQHLL…FGLHLLQVLS (91 aa)). Residues 205–297 (FMDEAQLIDV…YSLKVDPSIP (93 aa)) form the Rhodanese domain. The active-site Cysteine persulfide intermediate is cysteine 257.

The protein resides in the plastid. Its subcellular location is the chloroplast. This chain is Rhodanese-like/PpiC domain-containing protein 12, chloroplastic, found in Arabidopsis thaliana (Mouse-ear cress).